Here is a 208-residue protein sequence, read N- to C-terminus: dITP/XTP pyrophosphatase (208 aa).

11-16 (TGNAKK) lines the substrate pocket. Residue Asp73 is the Proton acceptor of the active site. Position 73 (Asp73) interacts with Mg(2+). Substrate is bound by residues Ser74, 157 to 160 (FGYD), Lys180, and 185 to 186 (HR).

The protein belongs to the HAM1 NTPase family. Homodimer. Requires Mg(2+) as cofactor.

It catalyses the reaction XTP + H2O = XMP + diphosphate + H(+). The enzyme catalyses dITP + H2O = dIMP + diphosphate + H(+). It carries out the reaction ITP + H2O = IMP + diphosphate + H(+). Its function is as follows. Pyrophosphatase that catalyzes the hydrolysis of nucleoside triphosphates to their monophosphate derivatives, with a high preference for the non-canonical purine nucleotides XTP (xanthosine triphosphate), dITP (deoxyinosine triphosphate) and ITP. Seems to function as a house-cleaning enzyme that removes non-canonical purine nucleotides from the nucleotide pool, thus preventing their incorporation into DNA/RNA and avoiding chromosomal lesions. The protein is dITP/XTP pyrophosphatase of Rhodopirellula baltica (strain DSM 10527 / NCIMB 13988 / SH1).